The primary structure comprises 77 residues: Acyl carrier protein (77 aa).

Residues 1–76 (MATFDDVKAV…DVVNYIDNLK (76 aa)) enclose the Carrier domain. The residue at position 36 (Ser36) is an O-(pantetheine 4'-phosphoryl)serine.

Belongs to the acyl carrier protein (ACP) family. 4'-phosphopantetheine is transferred from CoA to a specific serine of apo-ACP by AcpS. This modification is essential for activity because fatty acids are bound in thioester linkage to the sulfhydryl of the prosthetic group.

The protein localises to the cytoplasm. The protein operates within lipid metabolism; fatty acid biosynthesis. In terms of biological role, carrier of the growing fatty acid chain in fatty acid biosynthesis. In Campylobacter jejuni (strain RM1221), this protein is Acyl carrier protein.